Consider the following 1024-residue polypeptide: MKFFALFIQRPVATTLLTLAITLSGIIGFSLLPVSPLPQVDYPVIMVSASMPGADPETMASSVATPLERALGRIAGVNEMTSTSSLGSTRIILQFDLNRDINGAARDVQAALNAAQSLLPSGMPSRPTYRKMNPSDAPIMIMTLTSDTFSQGQLYDYASTKLAQKIAQTEGVSDVTVGGSSLPAVRVELNPSALFNQGVSLDAVRQAISAANVRRPQGSVDAAETHWQVQANDEIKTAEGYRPLIVHYNNGSPVRLQDVANVIDSVQDVRNAGMSAGQPAVLLVISREPGANIIATVDRIRAELPALRASIPASIQLNIAQDRSPTIRASLDEVERSLVIAVALVILVVFIFLRSGRATLIPAVAVPVSLIGTFAAMYLCGFSLNNLSLMALTIATGFVVDDAIVVLENISRHLEAGVKPMVAALRGVREVGFTVLSMSISLVAVFIPLLLMAGLPGRLFREFAVTLSVAIGISLVISLTLTPMMCAWLLRSHPKGQQQRIRGFGKVLLAIQQGYGRSLNWALSHTRWVMVVLLSTIALNVWLYISIPKTFFPEQDTGRMMGFIQADQSISFQSMQQKLKDFMQIVGADPAVDSVTGFTGGSRTNSGSMFISLKPLSERQETAQQVITRLRGKLAKEPGANLFLSSVQDIRVGGRHSNAAYQFTLLADDLAALREWEPKVRAALAKLPQLADVNSDQQDKGAEMALTYDRETMARLGIDVSEANALLNNAFGQRQISTIYQPLNQYKVVMEVAPEYTQDVSSLDKMFVINSNGQSIPLSYFAKWQPANAPLAVNHQGLSAASTISFNLPDGGSLSEATAAVERAMTELGVPSTVRGAFAGTAQVFQETLKSQLWLIMAAIATVYIVLGILYESYVHPLTILSTLPSAGVGALLALELFDAPFSLIALIGIMLLIGIVKKNAIMMVDFALDAQRNGNISAREAIFQASLLRFRPIIMTTLAALFGALPLVLSSGDGAELRQPLGITIVGGLVVSQLLTLYTTPVIYLYFDRLRNRFSKQPLMKLE.

Helical transmembrane passes span 12–32 (VATTLLTLAITLSGIIGFSLL), 333–353 (EVERSLVIAVALVILVVFIFL), 360–380 (LIPAVAVPVSLIGTFAAMYLC), 387–407 (LSLMALTIATGFVVDDAIVVL), 435–455 (VLSMSISLVAVFIPLLLMAGL), 469–489 (VAIGISLVISLTLTPMMCAWL), 528–548 (WVMVVLLSTIALNVWLYISIP), 853–873 (LWLIMAAIATVYIVLGILYES), 875–895 (VHPLTILSTLPSAGVGALLAL), 897–917 (LFDAPFSLIALIGIMLLIGIV), 953–973 (PIIMTTLAALFGALPLVLSSG), and 984–1004 (ITIVGGLVVSQLLTLYTTPVI).

The protein belongs to the resistance-nodulation-cell division (RND) (TC 2.A.6) family. MdtC subfamily. As to quaternary structure, part of a tripartite efflux system composed of MdtA, MdtB and MdtC. MdtC forms a heteromultimer with MdtB.

It localises to the cell inner membrane. The protein is Multidrug resistance protein MdtC of Yersinia pseudotuberculosis serotype IB (strain PB1/+).